We begin with the raw amino-acid sequence, 907 residues long: Phototropin-2 (907 aa).

The tract at residues 28 to 84 is disordered; the sequence is ATAGLEIVAEDAPSGSSGAHQQQAWRPVAPATAGRDSGGTGSGKSSVDGGVGRASHD. Positions 41-51 are enriched in polar residues; it reads SGSSGAHQQQA. One can recognise a PAS 1 domain in the interval 89 to 162; it reads VSQELKDALS…AKIRDAVKHG (74 aa). FMN is bound by residues 138–143, arginine 156, asparagine 171, asparagine 181, and glutamine 202; that span reads NCRFLQ. Position 139 is an S-4a-FMN cysteine (cysteine 139). Residues 163-217 enclose the PAC 1 domain; it reads RSFCGRLLNYRKDGAPFWNLLTVTPIRDDNGKVIKFIGMQVEVSKYTEGLSDKRM. A disordered region spans residues 332 to 363; the sequence is RSSVGSREAPAVVEEPAPAPPPAPEVVERTDS. In terms of domain architecture, PAS 2 spans 375 to 448; it reads QGIDLATTLE…DKIREAIREQ (74 aa). FMN is bound by residues 424 to 429, arginine 442, asparagine 457, asparagine 467, and glutamine 488; that span reads NCRFLQ. Cysteine 425 carries the S-4a-FMN cysteine modification. The PAC 2 domain maps to 449-503; it reads KEITVQLINYTKSGKKFWNLFHLQPMRDQKGELQYFIGVQLDGSDHVEPLRNRLS. A Protein kinase domain is found at 576–863; that stretch reads FKPVKPLGCG…ANDIKQHSFF (288 aa). ATP contacts are provided by residues 582-590 and lysine 605; that span reads LGCGDTGSV. The active-site Proton acceptor is the aspartate 701.

Belongs to the protein kinase superfamily. Ser/Thr protein kinase family. Homodimer. It depends on FMN as a cofactor. In terms of processing, autophosphorylated in response to blue light irradiation. 2 molecules of FMN bind covalently to cysteines after exposure to blue light and are reversed in the dark. Expressed at low levels in leaves of dark-grown seedlings.

The enzyme catalyses L-seryl-[protein] + ATP = O-phospho-L-seryl-[protein] + ADP + H(+). It catalyses the reaction L-threonyl-[protein] + ATP = O-phospho-L-threonyl-[protein] + ADP + H(+). Its function is as follows. Protein kinase that acts as a blue light photoreceptor in a signal-transduction pathway for phototropic responses. Regulates a wide range of physiological activities in plants that maximize the efficiency of photosynthesis, such as chloroplast relocations, stomata opening, and leaf expansion. The protein is Phototropin-2 (PHOT2) of Oryza sativa subsp. japonica (Rice).